The following is a 467-amino-acid chain: ATP-dependent protease ATPase subunit HslU (467 aa).

ATP-binding positions include Val20, Gly62–Glu67, Asp280, Glu345, and Arg417.

It belongs to the ClpX chaperone family. HslU subfamily. In terms of assembly, a double ring-shaped homohexamer of HslV is capped on each side by a ring-shaped HslU homohexamer. The assembly of the HslU/HslV complex is dependent on binding of ATP.

It localises to the cytoplasm. Its function is as follows. ATPase subunit of a proteasome-like degradation complex; this subunit has chaperone activity. The binding of ATP and its subsequent hydrolysis by HslU are essential for unfolding of protein substrates subsequently hydrolyzed by HslV. HslU recognizes the N-terminal part of its protein substrates and unfolds these before they are guided to HslV for hydrolysis. The sequence is that of ATP-dependent protease ATPase subunit HslU from Enterococcus faecalis (strain ATCC 700802 / V583).